The chain runs to 308 residues: Thiohydrolase (308 aa).

Belongs to the polyketide transferase af380 family.

The protein operates within mycotoxin biosynthesis. Thiohydrolase; part of the gene cluster that mediates the biosynthesis of brefeldin A (BFA), a protein transport inhibitor that shows antiviral, antifungal, and antitumor properties. The proposed biosynthesis of BFA involves formation of an acyclic polyketide chain that is differentially tailored throughout the backbone. The highly reducing polyketide synthase Bref-PKS is proposed to synthesize the precisely reduced octaketide precursor, which could then be directly offloaded by the thiohydrolase enzyme Bref-TH followed by a cytochrome P450 monooxygenase-mediated formation of the cyclopentane ring and macrocyclization to afford 7-deoxy BFA. Alternatively, the first ring annulation can also occur on the ACP-tethered intermediate before the thiohydrolase release and lactonization. The C7-hydroxylation by another cytochrome P450 monooxygenase is believed to be the final step in the process to obtain the final structure of BFA. In addition to the HRPKS Bref-PKS and the thiohydrolase Bref-TH, the brefeldin A biosynthesis cluster contains 4 cytochrome p450 monooxygenases (called orf3 to orf6), as well a the probable cluster-specific transcription regulator orf8. This Eupenicillium brefeldianum (Penicillium brefeldianum) protein is Thiohydrolase.